Reading from the N-terminus, the 455-residue chain is tRNA-2-methylthio-N(6)-dimethylallyladenosine synthase (455 aa).

The 115-residue stretch at K3–R117 folds into the MTTase N-terminal domain. The [4Fe-4S] cluster site is built by C12, C48, C80, C155, C159, and C162. Positions V141 to K375 constitute a Radical SAM core domain.

Belongs to the methylthiotransferase family. MiaB subfamily. In terms of assembly, monomer. Requires [4Fe-4S] cluster as cofactor.

It localises to the cytoplasm. It catalyses the reaction N(6)-dimethylallyladenosine(37) in tRNA + (sulfur carrier)-SH + AH2 + 2 S-adenosyl-L-methionine = 2-methylsulfanyl-N(6)-dimethylallyladenosine(37) in tRNA + (sulfur carrier)-H + 5'-deoxyadenosine + L-methionine + A + S-adenosyl-L-homocysteine + 2 H(+). Functionally, catalyzes the methylthiolation of N6-(dimethylallyl)adenosine (i(6)A), leading to the formation of 2-methylthio-N6-(dimethylallyl)adenosine (ms(2)i(6)A) at position 37 in tRNAs that read codons beginning with uridine. The chain is tRNA-2-methylthio-N(6)-dimethylallyladenosine synthase from Anaplasma marginale (strain St. Maries).